A 348-amino-acid polypeptide reads, in one-letter code: tRNA pseudouridine synthase D (348 aa).

The Nucleophile role is filled by Asp-81. The TRUD domain maps to 158 to 304 (GVPNYFGAQR…MRHERRSIEL (147 aa)).

The protein belongs to the pseudouridine synthase TruD family.

It catalyses the reaction uridine(13) in tRNA = pseudouridine(13) in tRNA. Functionally, responsible for synthesis of pseudouridine from uracil-13 in transfer RNAs. This chain is tRNA pseudouridine synthase D, found in Aliivibrio salmonicida (strain LFI1238) (Vibrio salmonicida (strain LFI1238)).